Consider the following 69-residue polypeptide: Antimicrobial peptide Meucin-18 (69 aa).

The N-terminal stretch at 1 to 16 is a signal peptide; it reads MVIFLAYFLVVNESEA. A propeptide spanning residues 38–69 is cleaved from the precursor; sequence ERSVMNRDLENLFDPYQRNLEMDRLLKQLRNY.

Belongs to the non-disulfide-bridged peptide (NDBP) superfamily. Medium-length antimicrobial peptide (group 3) family. Expressed by the venom gland.

Its subcellular location is the secreted. The protein localises to the target cell membrane. Its function is as follows. Amphipathic peptide that exhibits extensive cytolytic activities against both prokaryotic and eukaryotic cells. Acts by fastly disrupting the bacterial membrane. Is more potent against Gram-positive bacteria than against Gram-negative bacteria, and fungi (LC=25.1-8.3 uM). Shows potent activity against penicillin (MIC=3.0 uM) and methicillin (MIC=1.5-3.0 uM) resistant bacteria. Is lethal to the fungus Beauveria sp (LC=1.9 uM), a highly lethal pathogenic fungus to insects and resistant to many AMPs. Shows hemolytic activity against rabbit erythrocytes (37.7% of inhibition at 6.25 uM) and cytolysis against rat dorsal root ganglions. May act by disrupting the integrity of the bacterial cell membrane. Antibiotic activity is not affected by major negatively charged components of the prokaryotic cell wall (e.g. lipopolysaccharides and lipoteichoic acid). In vivo, intravenous injection into mice tail provokes uncomfortable symptoms with a death rate of 12.5%. In vivo, in a mouse model of lethal peritonitis, shows potent antibiotic activity without cytotoxicity, improving the survival rate. The polypeptide is Antimicrobial peptide Meucin-18 (Mesobuthus eupeus (Lesser Asian scorpion)).